We begin with the raw amino-acid sequence, 596 residues long: Trehalase (596 aa).

The signal sequence occupies residues 1-23 (MFKLPTISLLLVSWSCLVALSQA). Residues arginine 193, 200–201 (WD), asparagine 237, and 246–248 (RSQ) each bind substrate. Residues asparagine 288 and asparagine 293 are each glycosylated (N-linked (GlcNAc...) asparagine). The interval 303–323 (SSGPRPESYREDVETGEEFPT) is disordered. Substrate contacts are provided by residues 307–309 (RPE) and glycine 341. Aspartate 343 serves as the catalytic Proton donor/acceptor. 3 N-linked (GlcNAc...) asparagine glycosylation sites follow: asparagine 359, asparagine 451, and asparagine 516. The active-site Proton donor/acceptor is the glutamate 541. Glutamate 556 is a binding site for substrate.

This sequence belongs to the glycosyl hydrolase 37 family. As to expression, in the adult brain predominantly expressed in glial cells (at protein level).

The catalysed reaction is alpha,alpha-trehalose + H2O = alpha-D-glucose + beta-D-glucose. Functionally, enzyme that cleaves trehalose to produce 2 glucose molecules that can be used by the glycolytic pathway. Glycolysis is essential in glial cells but not in neurons; neurons rely on the citric acid cycle for their energy needs, and on lactate and alanine secreted into the hemolymph by glial cells to fuel it. The chain is Trehalase from Drosophila melanogaster (Fruit fly).